A 343-amino-acid polypeptide reads, in one-letter code: Mitochondrial import inner membrane translocase subunit TIM50-A (343 aa).

At 1–57 (MHKIVWFGTLNKSIGYIGKKKTCLLSPCEKICLNSARKTVQRCDKNYSPPKLRRIKN) the chain is on the mitochondrial matrix side. Residues 58–77 (FYTYSVVLGSLFSIVMWAIY) traverse the membrane as a helical segment. The Mitochondrial intermembrane portion of the chain corresponds to 78–343 (KLGKPEEDHR…GRSLRGSSIK (266 aa)). In terms of domain architecture, FCP1 homology spans 135 to 278 (YIQPPYSLVL…FDLTAFLQLI (144 aa)).

This sequence belongs to the TIM50 family. In terms of assembly, component of the TIM23 complex at least composed of Tim23, Tim17 (Tim17a1, Tim17a2 or Tim17b1) and a Tim50. In terms of tissue distribution, exclusively expressed in the testis.

It is found in the mitochondrion inner membrane. Its function is as follows. Essential component of the TIM23 complex, a complex that mediates the translocation of transit peptide-containing proteins across the mitochondrial inner membrane. The polypeptide is Mitochondrial import inner membrane translocase subunit TIM50-A (ttm3) (Drosophila melanogaster (Fruit fly)).